A 462-amino-acid polypeptide reads, in one-letter code: WD repeat-containing protein WRAP73 (462 aa).

WD repeat units follow at residues 46–86, 89–129, 176–210, and 221–260; these read TCLD…WHCK, EGSA…VSYI, TDTQ…YSLD, and EWSL…MITE. Phosphoserine is present on S281. 2 WD repeats span residues 328 to 369 and 371 to 410; these read NPRM…LFVV and EHMS…SVQV.

Interacts with SSX2IP. In terms of tissue distribution, ubiquitous.

The protein localises to the cytoplasm. Its subcellular location is the cytoskeleton. The protein resides in the microtubule organizing center. It is found in the centrosome. Its function is as follows. The SSX2IP:WRAP73 complex is proposed to act as regulator of spindle anchoring at the mitotic centrosome. Required for the centrosomal localization of SSX2IP and normal mitotic bipolar spindle morphology. Required for the targeting of centriole satellite proteins to centrosomes such as of PCM1, SSX2IP, CEP290 and PIBF1/CEP90. Required for ciliogenesis and involved in the removal of the CEP97:CCP110 complex from the mother centriole. Involved in ciliary vesicle formation at the mother centriole and required for the docking of vesicles to the basal body during ciliogenesis; may promote docking of RAB8A- and ARL13B-containing vesicles. The polypeptide is WD repeat-containing protein WRAP73 (Wrap73) (Mus musculus (Mouse)).